A 401-amino-acid polypeptide reads, in one-letter code: O-methyltransferase mfmE (401 aa).

Residues 243-244 (GG) and Asp268 each bind S-adenosyl-L-methionine. His308 functions as the Proton acceptor in the catalytic mechanism.

This sequence belongs to the class I-like SAM-binding methyltransferase superfamily. Cation-independent O-methyltransferase family. COMT subfamily.

It functions in the pathway secondary metabolite biosynthesis; terpenoid biosynthesis. Its function is as follows. O-methyltransferase; part of the gene cluster that mediates the biosynthesis of the phthalide-terpenoid hybrid 11'-O-desmethylfendlerol. Within the pathway, mfmE catalyzes the 7-O-methylation of the phthalide 5,7-dihydroxy-4-(hydroxymethyl)-6-methylphthalide to yield 5-hydroxy-4-(hydroxymethyl)-7-methoxy-6-methylphthalide. The biosynthesis of 11'-O-desmethylfendlerol begins with the NR-PKS mfmB that forms 3,5-dimethylorsellinic acid (DMOA), which is then transformed into the phthalide 5,7-dihydroxy-4-(hydroxymethyl)-6-methylphthalide by the cytochrome P450 monooxygenase mfmA and the hydrolase mfmC. Subsequently, the methyltransferase mfmE catalyzes 7-O-methylation to yield 5-hydroxy-4-(hydroxymethyl)-7-methoxy-6-methylphthalide, which undergoes C-3 hydroxylation by the cytochrome P450 monooxygenase mfmF. The resultant cyclopolic acid (2,5-dihydroxy-4-(hydroxymethyl)-7-methoxy-6-methylphthalide) is then farnesylated by the DMATS-type prenyltransferase mfmD to afford 5-O-farnesylcyclopolic acid. Finally, the Pyr4-family terpene cyclase mfmH cyclizes the farnesyl moiety of 5-O-farnesylcyclopolic acid into a drimane-like structure, thus completing the biosynthesis of 11'-O-desmethylfendlerol. The sequence is that of O-methyltransferase mfmE from Annulohypoxylon moriforme (Filamentous fungus).